A 421-amino-acid chain; its full sequence is ATP-dependent RNA helicase RhlB (421 aa).

Positions 9 to 37 (QKFSDFALHPVVVQALEKKGFYNCTPIQA) match the Q motif motif. Positions 40–219 (LPLTLAGRDV…FEQMNNAEYV (180 aa)) constitute a Helicase ATP-binding domain. 53–60 (AQTGTGKT) lines the ATP pocket. The DEAD box motif lies at 165 to 168 (DEAD). The region spanning 245-390 (RLLQTLIEEE…VSKYNPDALL (146 aa)) is the Helicase C-terminal domain. Residues 390–421 (LSELPPPKRLSRPRTGNGPRRSGAPRNRRRTG) are disordered. Over residues 405–414 (GNGPRRSGAP) the composition is skewed to low complexity.

Belongs to the DEAD box helicase family. RhlB subfamily. As to quaternary structure, component of the RNA degradosome, which is a multiprotein complex involved in RNA processing and mRNA degradation.

The protein localises to the cytoplasm. The enzyme catalyses ATP + H2O = ADP + phosphate + H(+). Its function is as follows. DEAD-box RNA helicase involved in RNA degradation. Has RNA-dependent ATPase activity and unwinds double-stranded RNA. In Cronobacter sakazakii (strain ATCC BAA-894) (Enterobacter sakazakii), this protein is ATP-dependent RNA helicase RhlB.